A 217-amino-acid polypeptide reads, in one-letter code: Ribonuclease HII (217 aa).

In terms of domain architecture, RNase H type-2 spans 27–216 (SRIAGVDEAG…VKESIREGIC (190 aa)). Residues aspartate 33, glutamate 34, and aspartate 126 each coordinate a divalent metal cation.

It belongs to the RNase HII family. It depends on Mn(2+) as a cofactor. Mg(2+) serves as cofactor.

It localises to the cytoplasm. It carries out the reaction Endonucleolytic cleavage to 5'-phosphomonoester.. Its function is as follows. Endonuclease that specifically degrades the RNA of RNA-DNA hybrids. This is Ribonuclease HII (rnhB) from Chlamydia muridarum (strain MoPn / Nigg).